The chain runs to 593 residues: Bifunctional purine biosynthesis protein ATIC (593 aa).

One can recognise an MGS-like domain in the interval Met1–Cys147. Residues Met1–Ser199 are IMP cyclohydrolase. IMP is bound by residues Ser13 to Lys15, Ser35 to Thr38, Arg65 to Thr68, Cys102 to Asn103, and Asp126 to Ile127. The active-site Proton donor/acceptor; for FAICAR cyclization activity is the Lys138. Lys200 carries the N6-acetyllysine modification. The tract at residues Lys200–His593 is AICAR formyltransferase. 5-amino-1-(5-phospho-beta-D-ribosyl)imidazole-4-carboxamide-binding positions include Arg208–Tyr209, His268, Gly317, Asp340, Asn432, and Arg452. Residue His268 is the Proton acceptor; for AICAR formyltransferase activity of the active site. Residue Ile453 participates in (6R)-10-formyltetrahydrofolate binding. A 5-amino-1-(5-phospho-beta-D-ribosyl)imidazole-4-carboxamide-binding site is contributed by Phe542. (6R)-10-formyltetrahydrofolate is bound by residues Asp547 and Ser566–Ala567. Arg589 contacts 5-amino-1-(5-phospho-beta-D-ribosyl)imidazole-4-carboxamide.

This sequence belongs to the PurH family. Homodimer. Associates with internalized INSR complexes on Golgi/endosomal membranes. Interacts with INSR; ATIC together with PRKAA2/AMPK2 and HACD3/PTPLAD1 is proposed to be part of a signaling network regulating INSR autophosphorylation and endocytosis.

It is found in the cytoplasm. Its subcellular location is the cytosol. It carries out the reaction (6R)-10-formyltetrahydrofolate + 5-amino-1-(5-phospho-beta-D-ribosyl)imidazole-4-carboxamide = 5-formamido-1-(5-phospho-D-ribosyl)imidazole-4-carboxamide + (6S)-5,6,7,8-tetrahydrofolate. The enzyme catalyses 10-formyldihydrofolate + 5-amino-1-(5-phospho-beta-D-ribosyl)imidazole-4-carboxamide = 5-formamido-1-(5-phospho-D-ribosyl)imidazole-4-carboxamide + 7,8-dihydrofolate. The catalysed reaction is IMP + H2O = 5-formamido-1-(5-phospho-D-ribosyl)imidazole-4-carboxamide. It functions in the pathway purine metabolism; IMP biosynthesis via de novo pathway; 5-formamido-1-(5-phospho-D-ribosyl)imidazole-4-carboxamide from 5-amino-1-(5-phospho-D-ribosyl)imidazole-4-carboxamide (10-formyl THF route): step 1/1. It participates in purine metabolism; IMP biosynthesis via de novo pathway; IMP from 5-formamido-1-(5-phospho-D-ribosyl)imidazole-4-carboxamide: step 1/1. With respect to regulation, AMP and XMP inhibit AICAR formyltransferase activity. AICAR formyltransferase activity is competitively inhibited by 2-[5-hydroxy-3-methyl-1-(2-methyl-4-sulfo-phenyl)-1H-pyrazol-4-ylazo]-4-sulfo-benzoic acid (326203-A). FAICAR cyclization is competitively inhibited by 1,5-dihydroimidazo[4,5-c][1,2,6]thiadiazin-4(3H)-one-2,2-dioxide and the corresponding nucleoside and nucleoside monophosphate. Bifunctional enzyme that catalyzes the last two steps of purine biosynthesis. Acts as a transformylase that incorporates a formyl group to the AMP analog AICAR (5-amino-1-(5-phospho-beta-D-ribosyl)imidazole-4-carboxamide) to produce the intermediate formyl-AICAR (FAICAR). Can use both 10-formyldihydrofolate and 10-formyltetrahydrofolate as the formyl donor in this reaction. Also catalyzes the cyclization of FAICAR to inosine monophosphate (IMP). Promotes insulin receptor/INSR autophosphorylation and is involved in INSR internalization. The polypeptide is Bifunctional purine biosynthesis protein ATIC (ATIC) (Gallus gallus (Chicken)).